The chain runs to 481 residues: Probable glycine dehydrogenase (decarboxylating) subunit 2 (481 aa).

Lysine 269 carries the post-translational modification N6-(pyridoxal phosphate)lysine.

Belongs to the GcvP family. C-terminal subunit subfamily. The glycine cleavage system is composed of four proteins: P, T, L and H. In this organism, the P 'protein' is a heterodimer of two subunits. Pyridoxal 5'-phosphate serves as cofactor.

The catalysed reaction is N(6)-[(R)-lipoyl]-L-lysyl-[glycine-cleavage complex H protein] + glycine + H(+) = N(6)-[(R)-S(8)-aminomethyldihydrolipoyl]-L-lysyl-[glycine-cleavage complex H protein] + CO2. Its function is as follows. The glycine cleavage system catalyzes the degradation of glycine. The P protein binds the alpha-amino group of glycine through its pyridoxal phosphate cofactor; CO(2) is released and the remaining methylamine moiety is then transferred to the lipoamide cofactor of the H protein. This chain is Probable glycine dehydrogenase (decarboxylating) subunit 2, found in Chlorobium chlorochromatii (strain CaD3).